A 443-amino-acid polypeptide reads, in one-letter code: Putative cytochrome bd menaquinol oxidase subunit I (443 aa).

Transmembrane regions (helical) follow at residues 19–39 (IIFA…ELIY), 60–80 (VLLG…ALLW), 93–113 (LPFQ…SIYV), 125–145 (IVAV…ITNV), 176–196 (FFIT…FIVA), 219–239 (ALLL…LNGH), 322–342 (LFNA…IGVV), 357–377 (LIIF…GWIF), and 405–425 (VLFL…VYVL). His182 contacts heme b.

It belongs to the cytochrome ubiquinol oxidase subunit 1 family. The cofactor is heme b.

The protein localises to the cell membrane. Its function is as follows. May have a role in sporulation. Can compensate for the loss of cytochrome aa3. In Bacillus subtilis (strain 168), this protein is Putative cytochrome bd menaquinol oxidase subunit I (ythA).